The chain runs to 951 residues: Protocadherin-20 (951 aa).

Residues 1–60 (MRGRGNARSSQALGVSWCPATWHPRLDMGRLHRPRSSTSYRNLPHLFLFFLFVGPFSCLG) form the signal peptide. The Extracellular portion of the chain corresponds to 61–890 (SYSRATELLY…VESVSCMPTL (830 aa)). Cadherin domains lie at 64 to 209 (RATE…APQF), 210 to 320 (PVSQ…CPLF), 321 to 535 (TDSQ…APIF), 536 to 639 (LQPL…SPRF), 640 to 742 (INKD…PPLV), and 746 to 863 (QSNM…EPEI). N-linked (GlcNAc...) asparagine glycosylation occurs at N135. 2 N-linked (GlcNAc...) asparagine glycosylation sites follow: N326 and N332. N-linked (GlcNAc...) asparagine glycans are attached at residues N680, N748, N803, N844, and N849. The chain crosses the membrane as a helical span at residues 891 to 911 (VALSVISLGSITLVTGMGIYI). The Cytoplasmic segment spans residues 912–951 (CLRKGEKHPREDENLEVQIPLKGKIDLHMRERKPMDISNI).

It localises to the cell membrane. Potential calcium-dependent cell-adhesion protein. This chain is Protocadherin-20 (PCDH20), found in Homo sapiens (Human).